Here is a 307-residue protein sequence, read N- to C-terminus: MSENQQALNHVVSMEDLTVDQVMKLIKRGIEFKNGAQIPYEDHPIVSNLFFEDSTRTHKSFEVAEIKLGLERLDFDVKTSSVNKGETLYDTILTLSALGVDVCVIRHPEVDYYRELIASPTITTSIINGGDGSGQHPSQSLLDLMTIYEEFGHFEGLKVAIAGDLDHSRVAKSNMQILKRLGSELFFAGPEEWRSQEFADYGKFVTIDEIIDQVDVMMFLRVQHERHDSGAVFSKEDYHAQHGLTQERYDRLKETAILMHPAPINRDVEIADHLVEAPKSRIVQQMTNGVFVRMAILESVLASRNAN.

2 residues coordinate carbamoyl phosphate: R56 and T57. Position 84 (K84) interacts with L-aspartate. Carbamoyl phosphate-binding residues include R106, H136, and Q139. L-aspartate is bound by residues R169 and R221. Carbamoyl phosphate is bound by residues A262 and P263.

This sequence belongs to the aspartate/ornithine carbamoyltransferase superfamily. ATCase family. As to quaternary structure, heterododecamer (2C3:3R2) of six catalytic PyrB chains organized as two trimers (C3), and six regulatory PyrI chains organized as three dimers (R2).

The catalysed reaction is carbamoyl phosphate + L-aspartate = N-carbamoyl-L-aspartate + phosphate + H(+). Its pathway is pyrimidine metabolism; UMP biosynthesis via de novo pathway; (S)-dihydroorotate from bicarbonate: step 2/3. Its function is as follows. Catalyzes the condensation of carbamoyl phosphate and aspartate to form carbamoyl aspartate and inorganic phosphate, the committed step in the de novo pyrimidine nucleotide biosynthesis pathway. The chain is Aspartate carbamoyltransferase catalytic subunit from Streptococcus pneumoniae serotype 2 (strain D39 / NCTC 7466).